The sequence spans 49 residues: Large ribosomal subunit protein eL40 (49 aa).

The protein belongs to the eukaryotic ribosomal protein eL40 family.

The polypeptide is Large ribosomal subunit protein eL40 (Natronomonas pharaonis (strain ATCC 35678 / DSM 2160 / CIP 103997 / JCM 8858 / NBRC 14720 / NCIMB 2260 / Gabara) (Halobacterium pharaonis)).